The chain runs to 542 residues: Chaperonin GroEL 2 (542 aa).

ATP-binding positions include 29–32, 86–90, glycine 413, 477–479, and aspartate 493; these read TLGP, DGTTT, and NAA.

Belongs to the chaperonin (HSP60) family. In terms of assembly, forms a cylinder of 14 subunits composed of two heptameric rings stacked back-to-back. Interacts with the co-chaperonin GroES.

Its subcellular location is the cytoplasm. It catalyses the reaction ATP + H2O + a folded polypeptide = ADP + phosphate + an unfolded polypeptide.. Its function is as follows. Together with its co-chaperonin GroES, plays an essential role in assisting protein folding. The GroEL-GroES system forms a nano-cage that allows encapsulation of the non-native substrate proteins and provides a physical environment optimized to promote and accelerate protein folding. The sequence is that of Chaperonin GroEL 2 from Frankia alni (strain DSM 45986 / CECT 9034 / ACN14a).